The sequence spans 763 residues: Hormone-sensitive lipase (763 aa).

The Involved in the stabilization of the negatively charged intermediate by the formation of the oxyanion hole signature appears at 350–352 (HGG). Residue Ser-424 is part of the active site. A Phosphoserine modification is found at Ser-552. The residue at position 554 (Ser-554) is a Phosphoserine; by AMPK. Phosphoserine occurs at positions 595, 627, and 649. The segment covering 616–627 (AREEAEAKEGLS) has biased composition (basic and acidic residues). The segment at 616 to 652 (AREEAEAKEGLSAKDGSSRVSNAFPEGFHPRRTSQGA) is disordered. Catalysis depends on residues Asp-692 and His-722.

The protein belongs to the 'GDXG' lipolytic enzyme family. As to quaternary structure, monomer and homodimer. Interacts with CAVIN1 in the adipocyte cytoplasm. Interacts with PLIN5. In terms of processing, phosphorylation by AMPK reduces its translocation towards the lipid droplets.

It is found in the cell membrane. The protein resides in the membrane. It localises to the caveola. Its subcellular location is the cytoplasm. The protein localises to the cytosol. It is found in the lipid droplet. It catalyses the reaction a diacylglycerol + H2O = a monoacylglycerol + a fatty acid + H(+). The enzyme catalyses a triacylglycerol + H2O = a diacylglycerol + a fatty acid + H(+). It carries out the reaction a monoacylglycerol + H2O = glycerol + a fatty acid + H(+). The catalysed reaction is Hydrolyzes glycerol monoesters of long-chain fatty acids.. It catalyses the reaction 1,2-di-(9Z-octadecenoyl)-glycerol + (9Z)-octadecenoate + H(+) = 1,2,3-tri-(9Z-octadecenoyl)-glycerol + H2O. The enzyme catalyses 2,3-di-(9Z)-octadecenoyl-sn-glycerol + H2O = 2-(9Z-octadecenoyl)-glycerol + (9Z)-octadecenoate + H(+). It carries out the reaction cholesteryl (9Z-octadecenoate) + H2O = cholesterol + (9Z)-octadecenoate + H(+). The catalysed reaction is 1,2,3-tri-(9Z-octadecenoyl)-glycerol + H2O = di-(9Z)-octadecenoylglycerol + (9Z)-octadecenoate + H(+). It catalyses the reaction all-trans-retinyl hexadecanoate + H2O = all-trans-retinol + hexadecanoate + H(+). The enzyme catalyses 1,2-di-(9Z-octadecenoyl)-glycerol + H2O = (9Z-octadecenoyl)-glycerol + (9Z)-octadecenoate + H(+). It carries out the reaction 2-(5Z,8Z,11Z,14Z-eicosatetraenoyl)-glycerol + H2O = glycerol + (5Z,8Z,11Z,14Z)-eicosatetraenoate + H(+). The catalysed reaction is 1-(9Z-octadecenoyl)-glycerol + H2O = glycerol + (9Z)-octadecenoate + H(+). It catalyses the reaction 2-(9Z-octadecenoyl)-glycerol + H2O = glycerol + (9Z)-octadecenoate + H(+). The enzyme catalyses 1-O-hexadecyl-2-acetyl-sn-glycerol + H2O = 1-O-hexadecyl-sn-glycerol + acetate + H(+). It carries out the reaction 1,2-di-(9Z-octadecenoyl)-sn-glycerol + H2O = (9Z-octadecenoyl)-glycerol + (9Z)-octadecenoate + H(+). The catalysed reaction is 1,3-di-(9Z-octadecenoyl)-glycerol + H2O = 1-(9Z-octadecenoyl)-glycerol + (9Z)-octadecenoate + H(+). It catalyses the reaction 1,2-di-(9Z-octadecenoyl)-glycerol + H2O = 2-(9Z-octadecenoyl)-glycerol + (9Z)-octadecenoate + H(+). Its pathway is glycerolipid metabolism; triacylglycerol degradation. In terms of biological role, lipase with broad substrate specificity, catalyzing the hydrolysis of triacylglycerols (TAGs), diacylglycerols (DAGs), monoacylglycerols (MAGs), cholesteryl esters and retinyl esters. Shows a preferential hydrolysis of DAGs over TAGs and MAGs. Preferentially hydrolyzes fatty acid (FA) esters at the sn-3 position of the glycerol backbone in DAGs and FA esters at the sn-1 and sn-2 positions of the glycerol backbone in TAGs. Catalyzes the hydrolysis of 2-arachidonoylglycerol, an endocannabinoid and of 2-acetyl monoalkylglycerol ether, the penultimate precursor of the pathway for de novo synthesis of platelet-activating factor. In adipose tissue and heart, it primarily hydrolyzes stored triglycerides to free fatty acids, while in steroidogenic tissues, it principally converts cholesteryl esters to free cholesterol for steroid hormone production. This Ictidomys tridecemlineatus (Thirteen-lined ground squirrel) protein is Hormone-sensitive lipase (LIPE).